Reading from the N-terminus, the 475-residue chain is Probable UDP-N-acetylglucosamine pyrophosphorylase (475 aa).

The Substrate binding signature appears at 103 to 106; sequence LAGG. UTP is bound by residues 103 to 106, Lys117, Gln194, and Gly220; that span reads LAGG. Asn221 provides a ligand contact to substrate. Residue Asp251 participates in UTP binding. Residues 301-302 carry the Substrate binding motif; that stretch reads EY. Lys378 contacts UTP. Ser405 carries the post-translational modification Phosphoserine. Lys410 is a binding site for substrate.

The protein belongs to the UDPGP type 1 family.

The protein localises to the cytoplasm. Its subcellular location is the nucleus. The enzyme catalyses N-acetyl-alpha-D-glucosamine 1-phosphate + UTP + H(+) = UDP-N-acetyl-alpha-D-glucosamine + diphosphate. It functions in the pathway nucleotide-sugar biosynthesis; UDP-N-acetyl-alpha-D-glucosamine biosynthesis; UDP-N-acetyl-alpha-D-glucosamine from N-acetyl-alpha-D-glucosamine 1-phosphate: step 1/1. The chain is Probable UDP-N-acetylglucosamine pyrophosphorylase (uap1) from Schizosaccharomyces pombe (strain 972 / ATCC 24843) (Fission yeast).